We begin with the raw amino-acid sequence, 60 residues long: Large ribosomal subunit protein uL30 (60 aa).

Belongs to the universal ribosomal protein uL30 family. Part of the 50S ribosomal subunit.

This chain is Large ribosomal subunit protein uL30, found in Streptomyces filamentosus (Streptomyces roseosporus).